Here is a 264-residue protein sequence, read N- to C-terminus: Major prion protein (264 aa).

The signal sequence occupies residues 1–24; that stretch reads MVKSHIGSWILVLFVAMWSDVGLC. Positions 25–241 are interaction with GRB2, ERI3 and SYN1; it reads KKRPKPGGGW…ESQAYYQRGA (217 aa). The segment at 28 to 118 is disordered; the sequence is PKPGGGWNTG…QWNKPSKPKT (91 aa). The span at 37-54 shows a compositional bias: low complexity; that stretch reads GGSRYPGPGSPGGNRYPP. Tandem repeats lie at residues 54 to 62, 63 to 70, 71 to 78, 79 to 86, 87 to 94, and 95 to 103. Positions 54–103 are 6 X 8 AA tandem repeats of P-H-G-G-G-W-G-Q; that stretch reads PQGGGGWGQPHGGGWGQPHGGGWGQPHGGGWGQPHGGGWGQPHGGGGWGQ. Over residues 55 to 107 the composition is skewed to gly residues; it reads QGGGGWGQPHGGGWGQPHGGGWGQPHGGGWGQPHGGGWGQPHGGGGWGQGGTH. Cu(2+) is bound by residues histidine 72, glycine 73, glycine 74, histidine 80, glycine 81, glycine 82, histidine 88, glycine 89, glycine 90, histidine 96, and glycine 98. Cysteine 190 and cysteine 225 are joined by a disulfide. N-linked (GlcNAc...) asparagine glycosylation is found at asparagine 192 and asparagine 208. Alanine 241 carries the GPI-anchor amidated alanine lipid modification. A propeptide spans 242–264 (removed in mature form); it reads SVILFSSPPVILLISFLIFLIVG.

Belongs to the prion family. As to quaternary structure, monomer and homodimer. Has a tendency to aggregate into amyloid fibrils containing a cross-beta spine, formed by a steric zipper of superposed beta-strands. Soluble oligomers may represent an intermediate stage on the path to fibril formation. Copper binding may promote oligomerization. Interacts with GRB2, APP, ERI3/PRNPIP and SYN1. Mislocalized cytosolically exposed PrP interacts with MGRN1; this interaction alters MGRN1 subcellular location and causes lysosomal enlargement. Interacts with KIAA1191.

It localises to the cell membrane. It is found in the golgi apparatus. In terms of biological role, its primary physiological function is unclear. Has cytoprotective activity against internal or environmental stresses. May play a role in neuronal development and synaptic plasticity. May be required for neuronal myelin sheath maintenance. May play a role in iron uptake and iron homeostasis. Soluble oligomers are toxic to cultured neuroblastoma cells and induce apoptosis (in vitro). Association with GPC1 (via its heparan sulfate chains) targets PRNP to lipid rafts. Also provides Cu(2+) or Zn(2+) for the ascorbate-mediated GPC1 deaminase degradation of its heparan sulfate side chains. This Ailuropoda melanoleuca (Giant panda) protein is Major prion protein (PRNP).